The following is a 491-amino-acid chain: Aspartyl/glutamyl-tRNA(Asn/Gln) amidotransferase subunit B (491 aa).

It belongs to the GatB/GatE family. GatB subfamily. In terms of assembly, heterotrimer of A, B and C subunits.

The enzyme catalyses L-glutamyl-tRNA(Gln) + L-glutamine + ATP + H2O = L-glutaminyl-tRNA(Gln) + L-glutamate + ADP + phosphate + H(+). The catalysed reaction is L-aspartyl-tRNA(Asn) + L-glutamine + ATP + H2O = L-asparaginyl-tRNA(Asn) + L-glutamate + ADP + phosphate + 2 H(+). Functionally, allows the formation of correctly charged Asn-tRNA(Asn) or Gln-tRNA(Gln) through the transamidation of misacylated Asp-tRNA(Asn) or Glu-tRNA(Gln) in organisms which lack either or both of asparaginyl-tRNA or glutaminyl-tRNA synthetases. The reaction takes place in the presence of glutamine and ATP through an activated phospho-Asp-tRNA(Asn) or phospho-Glu-tRNA(Gln). The sequence is that of Aspartyl/glutamyl-tRNA(Asn/Gln) amidotransferase subunit B from Prochlorococcus marinus (strain NATL1A).